The chain runs to 424 residues: MAKNIQAIRGMNDYLPGETAIWQRIEGTLKNVLGSYGYSEIRLPIVEQTPLFKRAIGEVTDVVEKEMYTFEDRNGDSLTLRPEGTAGCVRAGIEHGLLYNQEQRLWYIGPMFRHERPQKGRYRQFHQLGAEVFGLQGPDIDAELIMLTARWWRALGISEHVSLELNSIGSLEARANYRDALVAFLEQHQETLDEDCKRRMYTNPLRVLDSKNPDVQALLNDAPVLGDYLDDDSREHFAGLCKLLDAAGIAYTVNQRLVRGLDYYNRTVFEWVTNSLGSQGTVCAGGRYDGLVEQLGGRATPAVGFAMGLERLVLLVQAVNPEFIASPVVDIYLVAAGAQTQSAAMTLAERLRDEMPGVKLMTNHGGGNFKKQFARADKWGARIALVLGESEVADGTVVVKDLRSGEQTAVAQDSVAAHLRTLLG.

This sequence belongs to the class-II aminoacyl-tRNA synthetase family. Homodimer.

It is found in the cytoplasm. The enzyme catalyses tRNA(His) + L-histidine + ATP = L-histidyl-tRNA(His) + AMP + diphosphate + H(+). The chain is Histidine--tRNA ligase from Salmonella typhi.